A 215-amino-acid chain; its full sequence is ATP-dependent Clp protease proteolytic subunit (215 aa).

S116 acts as the Nucleophile in catalysis. The active site involves H141.

It belongs to the peptidase S14 family. In terms of assembly, fourteen ClpP subunits assemble into 2 heptameric rings which stack back to back to give a disk-like structure with a central cavity, resembling the structure of eukaryotic proteasomes.

The protein resides in the cytoplasm. It catalyses the reaction Hydrolysis of proteins to small peptides in the presence of ATP and magnesium. alpha-casein is the usual test substrate. In the absence of ATP, only oligopeptides shorter than five residues are hydrolyzed (such as succinyl-Leu-Tyr-|-NHMec, and Leu-Tyr-Leu-|-Tyr-Trp, in which cleavage of the -Tyr-|-Leu- and -Tyr-|-Trp bonds also occurs).. Cleaves peptides in various proteins in a process that requires ATP hydrolysis. Has a chymotrypsin-like activity. Plays a major role in the degradation of misfolded proteins. The chain is ATP-dependent Clp protease proteolytic subunit from Psychrobacter cryohalolentis (strain ATCC BAA-1226 / DSM 17306 / VKM B-2378 / K5).